The chain runs to 444 residues: Tubulin beta-6 chain (444 aa).

GTP is bound by residues Gln11, Glu69, Ser138, Gly142, Thr143, Gly144, Asn204, and Asn226. Glu69 serves as a coordination point for Mg(2+).

It belongs to the tubulin family. In terms of assembly, dimer of alpha and beta chains. A typical microtubule is a hollow water-filled tube with an outer diameter of 25 nm and an inner diameter of 15 nM. Alpha-beta heterodimers associate head-to-tail to form protofilaments running lengthwise along the microtubule wall with the beta-tubulin subunit facing the microtubule plus end conferring a structural polarity. Microtubules usually have 13 protofilaments but different protofilament numbers can be found in some organisms and specialized cells. The cofactor is Mg(2+). In terms of tissue distribution, expressed in roots, leaf sheaths, anthers, and suspension cultured cells.

The protein resides in the cytoplasm. The protein localises to the cytoskeleton. Tubulin is the major constituent of microtubules, a cylinder consisting of laterally associated linear protofilaments composed of alpha- and beta-tubulin heterodimers. Microtubules grow by the addition of GTP-tubulin dimers to the microtubule end, where a stabilizing cap forms. Below the cap, tubulin dimers are in GDP-bound state, owing to GTPase activity of alpha-tubulin. The chain is Tubulin beta-6 chain (TUBB6) from Oryza sativa subsp. japonica (Rice).